The sequence spans 122 residues: Large ribosomal subunit protein bL12 (122 aa).

Belongs to the bacterial ribosomal protein bL12 family. As to quaternary structure, homodimer. Part of the ribosomal stalk of the 50S ribosomal subunit. Forms a multimeric L10(L12)X complex, where L10 forms an elongated spine to which 2 to 4 L12 dimers bind in a sequential fashion. Binds GTP-bound translation factors.

Its function is as follows. Forms part of the ribosomal stalk which helps the ribosome interact with GTP-bound translation factors. Is thus essential for accurate translation. The sequence is that of Large ribosomal subunit protein bL12 from Histophilus somni (strain 129Pt) (Haemophilus somnus).